The following is a 353-amino-acid chain: Photosystem II D2 protein (353 aa).

The residue at position 2 (T2) is an N-acetylthreonine. Phosphothreonine is present on T2. The chain crosses the membrane as a helical span at residues 41–61 (CAYFALGGWFTGTTFVTSWYT). H118 is a chlorophyll a binding site. Residues 125-141 (GFMLRQFELARSVQLRP) form a helical membrane-spanning segment. Pheophytin a is bound by residues Q130 and N143. Residues 153-166 (VFVSVFLIYPLGQS) traverse the membrane as a helical segment. Position 198 (H198) interacts with chlorophyll a. Residues 208–228 (AALLCAIHGATVENTLFEDGD) traverse the membrane as a helical segment. A plastoquinone is bound by residues H215 and F262. H215 contacts Fe cation. Position 269 (H269) interacts with Fe cation. Residues 279–295 (GLWMSALGVVGLALNLR) traverse the membrane as a helical segment.

This sequence belongs to the reaction center PufL/M/PsbA/D family. PSII is composed of 1 copy each of membrane proteins PsbA, PsbB, PsbC, PsbD, PsbE, PsbF, PsbH, PsbI, PsbJ, PsbK, PsbL, PsbM, PsbT, PsbX, PsbY, PsbZ, Psb30/Ycf12, at least 3 peripheral proteins of the oxygen-evolving complex and a large number of cofactors. It forms dimeric complexes. The D1/D2 heterodimer binds P680, chlorophylls that are the primary electron donor of PSII, and subsequent electron acceptors. It shares a non-heme iron and each subunit binds pheophytin, quinone, additional chlorophylls, carotenoids and lipids. There is also a Cl(-1) ion associated with D1 and D2, which is required for oxygen evolution. The PSII complex binds additional chlorophylls, carotenoids and specific lipids. serves as cofactor.

It is found in the plastid. The protein resides in the chloroplast thylakoid membrane. The enzyme catalyses 2 a plastoquinone + 4 hnu + 2 H2O = 2 a plastoquinol + O2. Photosystem II (PSII) is a light-driven water:plastoquinone oxidoreductase that uses light energy to abstract electrons from H(2)O, generating O(2) and a proton gradient subsequently used for ATP formation. It consists of a core antenna complex that captures photons, and an electron transfer chain that converts photonic excitation into a charge separation. The D1/D2 (PsbA/PsbD) reaction center heterodimer binds P680, the primary electron donor of PSII as well as several subsequent electron acceptors. D2 is needed for assembly of a stable PSII complex. This Citrus sinensis (Sweet orange) protein is Photosystem II D2 protein.